Here is a 127-residue protein sequence, read N- to C-terminus: Ribonuclease P protein component (127 aa).

The segment at 99–127 (ALSASLRQQLRDGIDRSARRQEPAAERQR) is disordered. The span at 107–127 (QLRDGIDRSARRQEPAAERQR) shows a compositional bias: basic and acidic residues.

This sequence belongs to the RnpA family. Consists of a catalytic RNA component (M1 or rnpB) and a protein subunit.

The catalysed reaction is Endonucleolytic cleavage of RNA, removing 5'-extranucleotides from tRNA precursor.. In terms of biological role, RNaseP catalyzes the removal of the 5'-leader sequence from pre-tRNA to produce the mature 5'-terminus. It can also cleave other RNA substrates such as 4.5S RNA. The protein component plays an auxiliary but essential role in vivo by binding to the 5'-leader sequence and broadening the substrate specificity of the ribozyme. This is Ribonuclease P protein component from Mycobacteroides abscessus (strain ATCC 19977 / DSM 44196 / CCUG 20993 / CIP 104536 / JCM 13569 / NCTC 13031 / TMC 1543 / L948) (Mycobacterium abscessus).